Here is a 722-residue protein sequence, read N- to C-terminus: Polyribonucleotide nucleotidyltransferase (722 aa).

D495 and D501 together coordinate Mg(2+). One can recognise a KH domain in the interval 562–621 (PRLLSFRIDPELIGTVIGPGGRTIKGITERTNTKIDIEDGGIVTIASHDGVAAEEAQKII). The S1 motif domain maps to 631–699 (GEIFTGSITR…NRGRINLTLR (69 aa)). Over residues 701–711 (VSQNNNDMNYP) the composition is skewed to polar residues. A disordered region spans residues 701–722 (VSQNNNDMNYPQPTPTPVAPLN). Residues 712-722 (QPTPTPVAPLN) show a composition bias toward pro residues.

It belongs to the polyribonucleotide nucleotidyltransferase family. The cofactor is Mg(2+).

It is found in the cytoplasm. It catalyses the reaction RNA(n+1) + phosphate = RNA(n) + a ribonucleoside 5'-diphosphate. Functionally, involved in mRNA degradation. Catalyzes the phosphorolysis of single-stranded polyribonucleotides processively in the 3'- to 5'-direction. This chain is Polyribonucleotide nucleotidyltransferase, found in Prochlorococcus marinus (strain MIT 9211).